We begin with the raw amino-acid sequence, 134 residues long: Holo-[acyl-carrier-protein] synthase (134 aa).

D8 and E59 together coordinate Mg(2+).

Belongs to the P-Pant transferase superfamily. AcpS family. The cofactor is Mg(2+).

The protein localises to the cytoplasm. It catalyses the reaction apo-[ACP] + CoA = holo-[ACP] + adenosine 3',5'-bisphosphate + H(+). Functionally, transfers the 4'-phosphopantetheine moiety from coenzyme A to a Ser of acyl-carrier-protein. The polypeptide is Holo-[acyl-carrier-protein] synthase (Zymomonas mobilis subsp. mobilis (strain ATCC 31821 / ZM4 / CP4)).